The chain runs to 1031 residues: GTPase-activating protein DDB_G0291510 (1031 aa).

The interval 18–48 is disordered; sequence VEKGDIDENNSGSINNRPLSPTLFSSNSSNN. The span at 26–41 shows a compositional bias: polar residues; the sequence is NNSGSINNRPLSPTLF. One can recognise a Rap-GAP domain in the interval 186-404; sequence FKDLEQTQTE…RTFKDQLESI (219 aa). The 411-residue stretch at 471–881 folds into the CNH domain; the sequence is NEKINCLDVV…LSNDDCNLDN (411 aa). The interval 920 to 950 is disordered; sequence NNNYNNNGNNSNGGNNNNNNNNNNGCNNSLI.

The chain is GTPase-activating protein DDB_G0291510 from Dictyostelium discoideum (Social amoeba).